The sequence spans 141 residues: Hemoglobin subunit alpha-A (141 aa).

Residues 1 to 141 enclose the Globin domain; that stretch reads VLSGSDKTNV…VGNVLTAKYR (141 aa). Residue H58 participates in O2 binding. H87 provides a ligand contact to heme b.

The protein belongs to the globin family. As to quaternary structure, heterotetramer of two alpha chains and two beta chains. As to expression, red blood cells.

Functionally, involved in oxygen transport from the lung to the various peripheral tissues. The polypeptide is Hemoglobin subunit alpha-A (HBAA) (Chroicocephalus ridibundus (Black-headed gull)).